Reading from the N-terminus, the 177-residue chain is Thymidine kinase (177 aa).

ATP is bound at residue glycine 11–serine 18. The active-site Proton acceptor is the glutamate 83. Position 113 (phenylalanine 113) interacts with substrate. Residues cysteine 138 and cysteine 141 each coordinate Zn(2+). Residue isoleucine 157 to glycine 161 coordinates substrate. Zn(2+) is bound by residues cysteine 170 and cysteine 173.

The protein belongs to the thymidine kinase family. In terms of assembly, homotetramer. Two molecules of substrate bind to each enzyme tetramer.

It catalyses the reaction thymidine + ATP = dTMP + ADP + H(+). Phosphorylates thymidine and thymidine analogs, such as azidothymidine (AZT). Part of the salvage pathway for pyrimidine deoxyribonucleotide synthesis. The chain is Thymidine kinase (OPG101) from Monkeypox virus (strain Zaire-96-I-16) (MPX).